A 154-amino-acid chain; its full sequence is MGSDKKTPEEKRKHKRSSPSSPLDEVKSKRQNIKGDEERRKEKKDKSKKEKHKSHSSEEKKSGEKHKTKSHKHKDKSKNKFEELSKDDYFSKNNEFATWLKDKKNLFFSDLSSETARDLFSDFVIQWNKGKLDSQYYEGIATGPRSSHAWNIKK.

2 stretches are compositionally biased toward basic and acidic residues: residues 1–11 (MGSDKKTPEEK) and 24–48 (DEVK…DKSK). Residues 1-84 (MGSDKKTPEE…DKSKNKFEEL (84 aa)) are disordered. Residues 63 to 77 (GEKHKTKSHKHKDKS) are compositionally biased toward basic residues.

As to expression, specifically expressed in flowers pistils, especially in stigmas and styles. Barely detected in roots, stems, leaves, sepals, petals and stamen.

It localises to the nucleus. Its function is as follows. Component of the auxin signaling transduction pathway that regulates cell proliferation and differentiation during flowers stigmas and styles development. Involved in the regulation of auxin-related genes. The polypeptide is Style cell-cycle inhibitor 1-A (Nicotiana tabacum (Common tobacco)).